The sequence spans 320 residues: Beta-carotene 4-ketolase 3 (320 aa).

The enzyme catalyses echinenone + 2 AH2 + 2 O2 = canthaxanthin + 2 A + 3 H2O. The catalysed reaction is all-trans-beta-carotene + 2 AH2 + 2 O2 = echinenone + 2 A + 3 H2O. It participates in carotenoid biosynthesis. Its function is as follows. Involved in the biosynthesis of ketocarotenoids which are powerful anti-oxidative molecules. Catalyzes the conversion of beta-carotene to canthaxanthin via echinenone. This Haematococcus lacustris (Green alga) protein is Beta-carotene 4-ketolase 3.